We begin with the raw amino-acid sequence, 315 residues long: Cytosolic Fe-S cluster assembly factor nubp1-A (315 aa).

Residues 1–23 (MADIPDNAPQHCPGTDSTEAGKS) form a disordered region. Residues cysteine 12, cysteine 26, cysteine 29, and cysteine 35 each contribute to the [4Fe-4S] cluster site. 66 to 73 (GKGGVGKS) lines the ATP pocket. 2 residues coordinate [4Fe-4S] cluster: cysteine 239 and cysteine 242.

Belongs to the Mrp/NBP35 ATP-binding proteins family. NUBP1/NBP35 subfamily. Heterotetramer of 2 nubp1 and 2 nubp2 chains. The cofactor is [4Fe-4S] cluster.

Its subcellular location is the cytoplasm. Component of the cytosolic iron-sulfur (Fe/S) protein assembly (CIA) machinery. Required for maturation of extramitochondrial Fe-S proteins. The nubp1-nubp2 heterotetramer forms a Fe-S scaffold complex, mediating the de novo assembly of an Fe-S cluster and its transfer to target apoproteins. The sequence is that of Cytosolic Fe-S cluster assembly factor nubp1-A (nubp1-A) from Xenopus laevis (African clawed frog).